Here is a 76-residue protein sequence, read N- to C-terminus: Exodeoxyribonuclease 7 small subunit (76 aa).

Belongs to the XseB family. As to quaternary structure, heterooligomer composed of large and small subunits.

Its subcellular location is the cytoplasm. It catalyses the reaction Exonucleolytic cleavage in either 5'- to 3'- or 3'- to 5'-direction to yield nucleoside 5'-phosphates.. Its function is as follows. Bidirectionally degrades single-stranded DNA into large acid-insoluble oligonucleotides, which are then degraded further into small acid-soluble oligonucleotides. The polypeptide is Exodeoxyribonuclease 7 small subunit (Bacillus cereus (strain ATCC 14579 / DSM 31 / CCUG 7414 / JCM 2152 / NBRC 15305 / NCIMB 9373 / NCTC 2599 / NRRL B-3711)).